A 652-amino-acid polypeptide reads, in one-letter code: Type III restriction-modification enzyme StyLTI Mod subunit (652 aa).

Residues 135–138 form a binding of S-adenosyl methionine region; it reads DPPY.

This sequence belongs to the N(4)/N(6)-methyltransferase family. Homodimer, also forms a functional restriction-competent complex with Res.

The catalysed reaction is a 2'-deoxyadenosine in DNA + S-adenosyl-L-methionine = an N(6)-methyl-2'-deoxyadenosine in DNA + S-adenosyl-L-homocysteine + H(+). Its function is as follows. A beta subtype methylase that binds the system-specific DNA recognition site 5'-CAGAG-3' and methylates A-4 (of only 1 strand as the other does not have an A residue). DNA restriction requires both the Res and Mod subunits. The chain is Type III restriction-modification enzyme StyLTI Mod subunit from Salmonella typhimurium (strain LT2 / SGSC1412 / ATCC 700720).